Here is a 162-residue protein sequence, read N- to C-terminus: Phosphopantetheine adenylyltransferase (162 aa).

T10 contributes to the substrate binding site. ATP contacts are provided by residues 10–11 and H18; that span reads TF. Substrate is bound by residues K42, L74, and R88. ATP contacts are provided by residues 89–91, E99, and 124–130; these read GLR and FSCISST.

Belongs to the bacterial CoaD family. As to quaternary structure, homohexamer. Mg(2+) serves as cofactor.

It localises to the cytoplasm. The enzyme catalyses (R)-4'-phosphopantetheine + ATP + H(+) = 3'-dephospho-CoA + diphosphate. The protein operates within cofactor biosynthesis; coenzyme A biosynthesis; CoA from (R)-pantothenate: step 4/5. Functionally, reversibly transfers an adenylyl group from ATP to 4'-phosphopantetheine, yielding dephospho-CoA (dPCoA) and pyrophosphate. This chain is Phosphopantetheine adenylyltransferase, found in Francisella philomiragia subsp. philomiragia (strain ATCC 25017 / CCUG 19701 / FSC 153 / O#319-036).